A 364-amino-acid polypeptide reads, in one-letter code: UDP-N-acetylglucosamine--N-acetylmuramyl-(pentapeptide) pyrophosphoryl-undecaprenol N-acetylglucosamine transferase (364 aa).

Residues 13 to 15, Asn-125, Arg-165, Ser-192, and Gln-293 each bind UDP-N-acetyl-alpha-D-glucosamine; that span reads TGG.

This sequence belongs to the glycosyltransferase 28 family. MurG subfamily.

The protein localises to the cell inner membrane. It carries out the reaction di-trans,octa-cis-undecaprenyl diphospho-N-acetyl-alpha-D-muramoyl-L-alanyl-D-glutamyl-meso-2,6-diaminopimeloyl-D-alanyl-D-alanine + UDP-N-acetyl-alpha-D-glucosamine = di-trans,octa-cis-undecaprenyl diphospho-[N-acetyl-alpha-D-glucosaminyl-(1-&gt;4)]-N-acetyl-alpha-D-muramoyl-L-alanyl-D-glutamyl-meso-2,6-diaminopimeloyl-D-alanyl-D-alanine + UDP + H(+). It functions in the pathway cell wall biogenesis; peptidoglycan biosynthesis. In terms of biological role, cell wall formation. Catalyzes the transfer of a GlcNAc subunit on undecaprenyl-pyrophosphoryl-MurNAc-pentapeptide (lipid intermediate I) to form undecaprenyl-pyrophosphoryl-MurNAc-(pentapeptide)GlcNAc (lipid intermediate II). The sequence is that of UDP-N-acetylglucosamine--N-acetylmuramyl-(pentapeptide) pyrophosphoryl-undecaprenol N-acetylglucosamine transferase from Cereibacter sphaeroides (strain ATCC 17025 / ATH 2.4.3) (Rhodobacter sphaeroides).